The primary structure comprises 317 residues: Putative methyltransferase YMR310C (317 aa).

Residue Ser-190 is modified to Phosphoserine.

This sequence belongs to the class IV-like SAM-binding methyltransferase superfamily.

It is found in the nucleus. The protein is Putative methyltransferase YMR310C of Saccharomyces cerevisiae (strain ATCC 204508 / S288c) (Baker's yeast).